The primary structure comprises 447 residues: NADP-specific glutamate dehydrogenase (447 aa).

Residues Lys92, Gln113, and Lys116 each contribute to the substrate site. Residue Lys128 is the Proton donor of the active site. Gly167 provides a ligand contact to substrate. Residues Thr212 and Asn243 each coordinate NADP(+). Position 379 (Ser379) interacts with substrate.

Belongs to the Glu/Leu/Phe/Val dehydrogenases family. As to quaternary structure, homohexamer.

It carries out the reaction L-glutamate + NADP(+) + H2O = 2-oxoglutarate + NH4(+) + NADPH + H(+). Its function is as follows. Catalyzes the reversible oxidative deamination of glutamate to alpha-ketoglutarate and ammonia. The chain is NADP-specific glutamate dehydrogenase (gdh) from Corynebacterium glutamicum (strain ATCC 13032 / DSM 20300 / JCM 1318 / BCRC 11384 / CCUG 27702 / LMG 3730 / NBRC 12168 / NCIMB 10025 / NRRL B-2784 / 534).